The sequence spans 307 residues: Aspartate carbamoyltransferase catalytic subunit (307 aa).

R59 and T60 together coordinate carbamoyl phosphate. Residue K87 participates in L-aspartate binding. Carbamoyl phosphate-binding residues include R109, H137, and Q140. Residues R173 and R223 each contribute to the L-aspartate site. 2 residues coordinate carbamoyl phosphate: G266 and P267.

The protein belongs to the aspartate/ornithine carbamoyltransferase superfamily. ATCase family. As to quaternary structure, heterododecamer (2C3:3R2) of six catalytic PyrB chains organized as two trimers (C3), and six regulatory PyrI chains organized as three dimers (R2).

It carries out the reaction carbamoyl phosphate + L-aspartate = N-carbamoyl-L-aspartate + phosphate + H(+). The protein operates within pyrimidine metabolism; UMP biosynthesis via de novo pathway; (S)-dihydroorotate from bicarbonate: step 2/3. In terms of biological role, catalyzes the condensation of carbamoyl phosphate and aspartate to form carbamoyl aspartate and inorganic phosphate, the committed step in the de novo pyrimidine nucleotide biosynthesis pathway. This is Aspartate carbamoyltransferase catalytic subunit from Helicobacter pylori (strain HPAG1).